The following is a 153-amino-acid chain: IAA acetyltransferase (153 aa).

Positions 4-153 (VTIARESPLQ…PLSLFMEKPL (150 aa)) constitute an N-acetyltransferase domain.

In terms of biological role, participates in the tryptophan-dependent indole-3-acetic acid production, which is a phytohormone released by A.brasilense. This Azospirillum brasilense protein is IAA acetyltransferase.